A 98-amino-acid chain; its full sequence is Large ribosomal subunit protein uL23 (98 aa).

The protein belongs to the universal ribosomal protein uL23 family. In terms of assembly, part of the 50S ribosomal subunit. Contacts protein L29, and trigger factor when it is bound to the ribosome.

In terms of biological role, one of the early assembly proteins it binds 23S rRNA. One of the proteins that surrounds the polypeptide exit tunnel on the outside of the ribosome. Forms the main docking site for trigger factor binding to the ribosome. This chain is Large ribosomal subunit protein uL23, found in Bifidobacterium longum (strain DJO10A).